Reading from the N-terminus, the 248-residue chain is Large ribosomal subunit protein uL30 (248 aa).

An N-acetylmethionine modification is found at methionine 1. 4 repeat units span residues 7 to 18 (KKKEVPAVPETL), 19 to 30 (KKKRRNFAELKI), 31 to 42 (KRLRKKFAQKML), and 43 to 54 (RKARRKLIYEKA). The 4 X 12 AA tandem repeats stretch occupies residues 7–54 (KKKEVPAVPETLKKKRRNFAELKIKRLRKKFAQKMLRKARRKLIYEKA). A Phosphothreonine modification is found at threonine 17. Residue lysine 124 is modified to N6-acetyllysine. Lysine 127 carries the N6-succinyllysine modification. Tyrosine 139 carries the phosphotyrosine modification.

Belongs to the universal ribosomal protein uL30 family. In terms of assembly, component of the large ribosomal subunit. Homodimer. Interacts with DHX33.

The protein localises to the cytoplasm. Its function is as follows. Component of the large ribosomal subunit. The ribosome is a large ribonucleoprotein complex responsible for the synthesis of proteins in the cell. Binds to G-rich structures in 28S rRNA and in mRNAs. Plays a regulatory role in the translation apparatus; inhibits cell-free translation of mRNAs. This chain is Large ribosomal subunit protein uL30 (RPL7), found in Homo sapiens (Human).